The following is a 294-amino-acid chain: 4-diphosphocytidyl-2-C-methyl-D-erythritol kinase (294 aa).

Lysine 11 is a catalytic residue. ATP is bound at residue 93 to 103 (PFGAGLGGGSS). Residue aspartate 135 is part of the active site.

It belongs to the GHMP kinase family. IspE subfamily.

It catalyses the reaction 4-CDP-2-C-methyl-D-erythritol + ATP = 4-CDP-2-C-methyl-D-erythritol 2-phosphate + ADP + H(+). It participates in isoprenoid biosynthesis; isopentenyl diphosphate biosynthesis via DXP pathway; isopentenyl diphosphate from 1-deoxy-D-xylulose 5-phosphate: step 3/6. In terms of biological role, catalyzes the phosphorylation of the position 2 hydroxy group of 4-diphosphocytidyl-2C-methyl-D-erythritol. This chain is 4-diphosphocytidyl-2-C-methyl-D-erythritol kinase, found in Chlorobium phaeobacteroides (strain DSM 266 / SMG 266 / 2430).